The following is a 277-amino-acid chain: F420-dependent methylenetetrahydromethanopterin dehydrogenase (277 aa).

This sequence belongs to the MTD family.

It carries out the reaction 5,10-methylenetetrahydromethanopterin + oxidized coenzyme F420-(gamma-L-Glu)(n) + 2 H(+) = 5,10-methenyl-5,6,7,8-tetrahydromethanopterin + reduced coenzyme F420-(gamma-L-Glu)(n). The protein operates within one-carbon metabolism; methanogenesis from CO(2); 5,10-methylene-5,6,7,8-tetrahydromethanopterin from 5,10-methenyl-5,6,7,8-tetrahydromethanopterin (coenzyme F420 route): step 1/1. Its function is as follows. Catalyzes the reversible reduction of methenyl-H(4)MPT(+) to methylene-H(4)MPT. The polypeptide is F420-dependent methylenetetrahydromethanopterin dehydrogenase (Methanococcus maripaludis (strain C5 / ATCC BAA-1333)).